Consider the following 414-residue polypeptide: 3-oxoacyl-[acyl-carrier-protein] synthase 2 (414 aa).

A Ketosynthase family 3 (KS3) domain is found at N4–K411. Active-site for beta-ketoacyl synthase activity residues include C165, H304, and H341.

Belongs to the thiolase-like superfamily. Beta-ketoacyl-ACP synthases family.

It catalyses the reaction a fatty acyl-[ACP] + malonyl-[ACP] + H(+) = a 3-oxoacyl-[ACP] + holo-[ACP] + CO2. The enzyme catalyses (9Z)-hexadecenoyl-[ACP] + malonyl-[ACP] + H(+) = 3-oxo-(11Z)-octadecenoyl-[ACP] + holo-[ACP] + CO2. It functions in the pathway lipid metabolism; fatty acid biosynthesis. Functionally, involved in the type II fatty acid elongation cycle. Catalyzes the elongation of a wide range of acyl-ACP by the addition of two carbons from malonyl-ACP to an acyl acceptor. Can efficiently catalyze the conversion of palmitoleoyl-ACP (cis-hexadec-9-enoyl-ACP) to cis-vaccenoyl-ACP (cis-octadec-11-enoyl-ACP), an essential step in the thermal regulation of fatty acid composition. This chain is 3-oxoacyl-[acyl-carrier-protein] synthase 2 (fabF), found in Staphylococcus aureus (strain MW2).